A 536-amino-acid chain; its full sequence is SNW domain-containing protein 1 (536 aa).

The disordered stretch occupies residues Met1 to Tyr46. Residue Ala2 is modified to N-acetylalanine. A Phosphoserine modification is found at Ser14. Lys23 is covalently cross-linked (Glycyl lysine isopeptide (Lys-Gly) (interchain with G-Cter in SUMO2)). The tract at residues Gly59 to Lys79 is interaction with PPIL1. Residues Lys81, Lys97, Lys115, Lys122, Lys141, Lys158, and Lys170 each participate in a glycyl lysine isopeptide (Lys-Gly) (interchain with G-Cter in SUMO2) cross-link. The SNW stretch occupies residues Ala174–Lys339. Phosphoserine is present on residues Ser182 and Ser190. A Glycyl lysine isopeptide (Lys-Gly) (interchain with G-Cter in SUMO2) cross-link involves residue Lys193. Residues Pro209–Ser234 form a disordered region. A phosphoserine mark is found at Ser224, Ser232, and Ser234. Glycyl lysine isopeptide (Lys-Gly) (interchain with G-Cter in SUMO2) cross-links involve residues Lys240, Lys258, Lys286, Lys339, Lys344, Lys416, and Lys441. The tract at residues Lys311–Arg386 is disordered. At Ser446 the chain carries Phosphoserine. A Glycyl lysine isopeptide (Lys-Gly) (interchain with G-Cter in SUMO2) cross-link involves residue Lys452. Composition is skewed to basic and acidic residues over residues Thr469–Glu489 and Lys503–Gly530. The tract at residues Thr469–Glu536 is disordered. Phosphoserine is present on residues Ser479 and Ser481. Lys509 is covalently cross-linked (Glycyl lysine isopeptide (Lys-Gly) (interchain with G-Cter in SUMO2)).

This sequence belongs to the SNW family. In terms of assembly, identified in the spliceosome C complex. Associates with U4/U6-U5 tri-small nuclear ribonucleoproteins (U4/U6-U5 tri-snRNPs). Component of the minor spliceosome, which splices U12-type introns. Interacts with SKI, SMAD2,SMAD3, RBPJ, RB1, PABPN1, MAGEA1, SIRT1, FOXN3, U2AF2, PPIL1, DAXX and ATP1B4. Interacts with VDR and RXRA; preferentially associates with VDR:RXRA heterodimers. Interacts with NCOR2. Interacts with MAML1. Interacts with NOTCH1 NICD; the interaction involves multimerized NOTCH1 NICD. Forms a complex with NOTCH1 NICD and MAML1; the association is dissociated by RBPJ. Associates with positive transcription elongation factor b (P-TEFb). Component of the SNARP complex which consists at least of SNIP1, SNW1, THRAP3, BCLAF1 and PNN.

The protein localises to the nucleus. In terms of biological role, involved in pre-mRNA splicing as component of the spliceosome. As a component of the minor spliceosome, involved in the splicing of U12-type introns in pre-mRNAs. Required in the specific splicing of CDKN1A pre-mRNA; the function probably involves the recruitment of U2AF2 to the mRNA. May recruit PPIL1 to the spliceosome. May be involved in cyclin-D1/CCND1 mRNA stability through the SNARP complex which associates with both the 3'end of the CCND1 gene and its mRNA. Involved in transcriptional regulation. Modulates TGF-beta-mediated transcription via association with SMAD proteins, MYOD1-mediated transcription via association with PABPN1, RB1-mediated transcriptional repression, and retinoid-X receptor (RXR)- and vitamin D receptor (VDR)-dependent gene transcription in a cell line-specific manner probably involving coactivators NCOA1 and GRIP1. Is involved in NOTCH1-mediated transcriptional activation. Binds to multimerized forms of Notch intracellular domain (NICD) and is proposed to recruit transcriptional coactivators such as MAML1 to form an intermediate preactivation complex which associates with DNA-bound CBF-1/RBPJ to form a transcriptional activation complex by releasing SNW1 and redundant NOTCH1 NICD. The polypeptide is SNW domain-containing protein 1 (SNW1) (Pongo abelii (Sumatran orangutan)).